Consider the following 522-residue polypeptide: Sulfite reductase [NADPH] flavoprotein alpha-component (522 aa).

Positions 60–198 constitute a Flavodoxin-like domain; sequence ITILFGSQTG…DTERWSSDAL (139 aa). Residues 217–242 are disordered; sequence TLRSHQDLRSHQEQSRNRARPYDKDN. Residues 220-242 show a composition bias toward basic and acidic residues; that stretch reads SHQDLRSHQEQSRNRARPYDKDN. Residues 241-399 enclose the FAD-binding FR-type domain; that stretch reads DNPYTATLLE…VAPYRAFLQQ (159 aa).

Alpha(8)-beta(8). The alpha component is a flavoprotein, the beta component is a hemoprotein. FAD serves as cofactor. FMN is required as a cofactor.

The enzyme catalyses hydrogen sulfide + 3 NADP(+) + 3 H2O = sulfite + 3 NADPH + 4 H(+). Functionally, catalyzes the 6-electron reduction of sulfite to sulfide. This is one of several activities required for the biosynthesis of L-cysteine from sulfate. The flavo-protein component catalyzes the electron flow from NADPH -&gt; FAD -&gt; FMN to the hemoprotein component. In Thiocapsa roseopersicina, this protein is Sulfite reductase [NADPH] flavoprotein alpha-component (cysJ).